A 341-amino-acid polypeptide reads, in one-letter code: Heat-shock protein cognate (HSC) co-chaperone sgt12 (341 aa).

The tract at residues 86-123 (PSKEPASAGAQAQSTEAQQPKAGAPTPESDKLKSEGNA) is disordered. 3 TPR repeats span residues 114–147 (SDKL…APAN), 148–181 (PIYL…DPKY), and 182–215 (SKAW…EGNG). Residues 232–280 (EEANRGAEPPADDVDDAAGASRGAGGMPDLSSLASMLGGRGGGGGGMPD) form a disordered region. Gly residues predominate over residues 269–278 (GGRGGGGGGM).

This sequence belongs to the SGT family. In terms of assembly, forms homodimers. Component of the get4/get5/sgt2 sorting complex. Dimers of sgt2 bind directly a single get5. Binds HSC family members ssa1, sse1, hsp104 and hsc82 via its TPR domain.

The protein resides in the cytoplasm. Functionally, heat-shock protein cognate (HSC) co-chaperone that preferentially binds endoplasmic reticulum-destined tail-anchored (TA) proteins and directs them to the GET (guided entry of TA proteins) pathway via get4 and get5. Get4 and get5 form an obligate complex that catalyzes the transfer of tail-anchored proteins destined to the endoplasmic reticulum from sgt2 to the cytosolic targeting factor which then targets the TA protein to the ER membrane via get1/get2. This is Heat-shock protein cognate (HSC) co-chaperone sgt12 from Aspergillus fumigatus (strain ATCC MYA-4609 / CBS 101355 / FGSC A1100 / Af293) (Neosartorya fumigata).